The primary structure comprises 159 residues: Growth arrest and DNA damage-inducible protein GADD45 gamma (159 aa).

The segment at 43 to 86 is homodimerization; that stretch reads VYESAKVLNVDPDNVTFCVLAADEEDEGDIALQIHFTLIQAFCC.

It belongs to the GADD45 family. Undergoes concentration-dependent homodimerization, which is required for growth inhibititory activity and enhances interaction with PCNA. Interacts with GADD45GIP1. Interacts with PCNA.

Its function is as follows. Involved in the regulation of growth and apoptosis. Mediates activation of stress-responsive MTK1/MEKK4 MAPKKK. The chain is Growth arrest and DNA damage-inducible protein GADD45 gamma (GADD45G) from Bos taurus (Bovine).